Reading from the N-terminus, the 411-residue chain is Multidrug resistance protein MdtG (411 aa).

The next 11 membrane-spanning stretches (helical) occupy residues 17 to 37 (LFVAWCGCFLTGIAFSLVMPF), 59 to 79 (LVFSITFLFSAIASPFWGGLA), 92 to 112 (ALGMSVVMVLMGLATSIWQFL), 116 to 136 (AVLGLLGGFVPNANALIATQV), 147 to 167 (WLSTGAVSGALIGPLIGGLLA), 174 to 194 (PVFFITASVLFVCFIMTLFAV), 222 to 242 (VLTLFVTTMIIQVATGSIAPI), 257 to 277 (LAFVSGLIASVPGVAALISAP), 291 to 311 (ILVAMLLVSVLLLIPMSMVQN), 320 to 340 (FLLGAADGALLPAVQTLLIYN), and 379 to 399 (AVFVVTACVVLFNAIYSWITL).

Belongs to the major facilitator superfamily. DHA1 family. MdtG (TC 2.A.1.2.20) subfamily.

Its subcellular location is the cell inner membrane. This is Multidrug resistance protein MdtG from Erwinia billingiae (strain Eb661).